Reading from the N-terminus, the 784-residue chain is DNA repair and recombination protein RAD54-like (784 aa).

Residues 1-54 (MRRSLAPSQRGPMRPESRHSFTPPLLKKNKRSCQQELEREQELDRKRQSALRDA) are disordered. Residues 2–9 (RRSLAPSQ) form a required for chromatin remodeling, strand pairing activities and coupling of ATPase activity region. Residue S20 is modified to Phosphoserine. T22 carries the phosphothreonine modification. Residues 36–47 (ELEREQELDRKR) are compositionally biased toward basic and acidic residues. The Helicase ATP-binding domain maps to 172–346 (EGKRGNFNGC…YSLVNFVNPE (175 aa)). 185–192 (DEMGLGKT) contacts ATP. The short motif at 297-300 (DEGH) is the DEGH box element. One can recognise a Helicase C-terminal domain in the interval 503 to 660 (LLDFMLAAIR…NNESAEKHFT (158 aa)). The segment at 751 to 784 (EEAASEQPEEKPDRRKRPSTPPSDDSADEDFLGF) is disordered. Positions 775–784 (DSADEDFLGF) are enriched in acidic residues.

Belongs to the SNF2/RAD54 helicase family. In terms of assembly, interacts (via N-terminus) with spn-A/Rad51.

Its subcellular location is the nucleus. Involved in mitotic DNA repair and meiotic recombination. Functions in the recombinational DNA repair pathway. Essential for interhomolog gene conversion (GC), but may have a less important role in intersister GC than spn-A/Rad51. In the presence of DNA, spn-A/Rad51 enhances the ATPase activity of okr/Rad54. The protein is DNA repair and recombination protein RAD54-like of Drosophila yakuba (Fruit fly).